Consider the following 200-residue polypeptide: Glutathione S-transferase domain-containing protein DDB_G0273153/DDB_G0273923 (200 aa).

Positions 1–71 (MISSIYIFKI…YISNNHNFSG (71 aa)) constitute a GST N-terminal domain. The GST C-terminal domain maps to 73–195 (SLQESARVDD…INSNNINSQS (123 aa)).

This sequence belongs to the GST superfamily.

This is Glutathione S-transferase domain-containing protein DDB_G0273153/DDB_G0273923 from Dictyostelium discoideum (Social amoeba).